Reading from the N-terminus, the 963-residue chain is Vacuolar membrane protease (963 aa).

Over 1-15 (MVSSRRGFNPIAFTP) the chain is Cytoplasmic. The chain crosses the membrane as a helical span at residues 16–36 (WPVTILTSLVYLALIIPIIVV). Residues 37-391 (HHLVPPAPKQ…FQLNTLFGLS (355 aa)) are Vacuolar-facing. N-linked (GlcNAc...) asparagine glycosylation is found at N111 and N114. H170 and D182 together coordinate Zn(2+). The Proton acceptor role is filled by E216. Zn(2+) contacts are provided by E217, E242, and H315. The chain crosses the membrane as a helical span at residues 392-412 (VALLVVAPLLLILTSVALFAV). The Cytoplasmic segment spans residues 413 to 441 (DKMYMFSMYTYLSESGGQVSLYGLRGMFR). A helical transmembrane segment spans residues 442–462 (FPLILGISTALTVALAFLIMK). The Vacuolar segment spans residues 463–473 (VNPFIIYSSPY). A helical transmembrane segment spans residues 474–494 (AVWSMMLSTCMFFAWFISCVA). Over 495–504 (DFARPSALHR) the chain is Cytoplasmic. Residues 505 to 525 (AYAFSWMFGILWVFLVIATVY) traverse the membrane as a helical segment. The Vacuolar portion of the chain corresponds to 526–535 (QRQHGIASSY). Residues 536–556 (FIVFYFAGVSVATWISYLELF) form a helical membrane-spanning segment. The Cytoplasmic segment spans residues 557–668 (GLSTTQDYAR…WSIYLVSSAW (112 aa)). The interval 569–618 (SRLSDRTPSSDSHLLAPSADELPSSGSVAGRDFNPEDVEDEEPTESTSLL) is disordered. Residues 603 to 612 (PEDVEDEEPT) show a composition bias toward acidic residues. The helical transmembrane segment at 669-689 (ILQFLLVAPIVLILLGQLGLF) threads the bilayer. The Vacuolar portion of the chain corresponds to 690–705 (LTSATYQIGADGGSQF). Residues 706–726 (IIYIGIAVLSVLILLPLFPFI) form a helical membrane-spanning segment. Residues 727–732 (HRFTYH) lie on the Cytoplasmic side of the membrane. The chain crosses the membrane as a helical span at residues 733-753 (IPTFMLFVLIGTLVYNLTAFP). The Vacuolar segment spans residues 754–963 (FSHNSRLKVA…LVEGSYSFKL (210 aa)). N835 carries an N-linked (GlcNAc...) asparagine glycan.

This sequence belongs to the peptidase M28 family. Requires Zn(2+) as cofactor.

It localises to the vacuole membrane. Functionally, may be involved in vacuolar sorting and osmoregulation. The chain is Vacuolar membrane protease from Arthroderma gypseum (strain ATCC MYA-4604 / CBS 118893) (Microsporum gypseum).